A 333-amino-acid polypeptide reads, in one-letter code: Adenosine deaminase (333 aa).

Residues His12 and His14 each coordinate Zn(2+). His14, Asp16, and Gly170 together coordinate substrate. A Zn(2+)-binding site is contributed by His197. The active-site Proton donor is Glu200. Asp278 provides a ligand contact to Zn(2+). Substrate is bound at residue Asp279.

It belongs to the metallo-dependent hydrolases superfamily. Adenosine and AMP deaminases family. Adenosine deaminase subfamily. It depends on Zn(2+) as a cofactor.

It catalyses the reaction adenosine + H2O + H(+) = inosine + NH4(+). The catalysed reaction is 2'-deoxyadenosine + H2O + H(+) = 2'-deoxyinosine + NH4(+). In terms of biological role, catalyzes the hydrolytic deamination of adenosine and 2-deoxyadenosine. The polypeptide is Adenosine deaminase (Escherichia coli O81 (strain ED1a)).